The chain runs to 335 residues: MVIVLQPASFDSNLYVNPKCKPRPVLIPVIDLTDSDAKTQIVKACEEFGFFKVINHGVRPDLLTQLEQEAINFFALHHSLKDKAGPPDPFGYGTKRIGPNGDLGWLEYILLNANLCLESHKTTAIFRHTPAIFREAVEEYIKEMKRMSSKFLEMVEEELKIEPKEKLSRLVKVKESDSCLRMNHYPEKEETPVKEEIGFGEHTDPQLISLLRSNDTEGLQICVKDGTWVDVTPDHSSFFVLVGDTLQVMTNGRFKSVKHRVVTNTKRSRISMIYFAGPPLSEKIAPLSCLVPKQDDCLYNEFTWSQYKLSAYKTKLGDYRLGLFEKRPPFSLSNV.

Residues 175–278 enclose the Fe2OG dioxygenase domain; it reads ESDSCLRMNH…RISMIYFAGP (104 aa). The Fe cation site is built by His202, Asp204, and His259. Residue Arg269 is part of the active site.

Belongs to the iron/ascorbate-dependent oxidoreductase family. GA2OX subfamily. Requires Fe(2+) as cofactor. Not expressed in the apex.

It catalyses the reaction gibberellin A1 + 2-oxoglutarate + O2 = gibberellin A8 + succinate + CO2. Its pathway is plant hormone biosynthesis; gibberellin biosynthesis. In terms of biological role, catalyzes the 2-beta-hydroxylation of several biologically active gibberellins, leading to the homeostatic regulation of their endogenous level. Catabolism of gibberellins (GAs) plays a central role in plant development. Converts GA9/GA20 to GA51/GA29 and GA4/GA1 to GA34/GA8. The sequence is that of Gibberellin 2-beta-dioxygenase 3 (GA2OX3) from Arabidopsis thaliana (Mouse-ear cress).